The sequence spans 296 residues: UDP-N-acetylenolpyruvoylglucosamine reductase (296 aa).

In terms of domain architecture, FAD-binding PCMH-type spans 26 to 191 (RIGGPANYFK…LSATFRLSKS (166 aa)). Arginine 170 is an active-site residue. Cysteine 218 serves as the catalytic Proton donor. The active site involves glutamate 287.

The protein belongs to the MurB family. The cofactor is FAD.

Its subcellular location is the cytoplasm. It catalyses the reaction UDP-N-acetyl-alpha-D-muramate + NADP(+) = UDP-N-acetyl-3-O-(1-carboxyvinyl)-alpha-D-glucosamine + NADPH + H(+). It functions in the pathway cell wall biogenesis; peptidoglycan biosynthesis. In terms of biological role, cell wall formation. This is UDP-N-acetylenolpyruvoylglucosamine reductase from Chlamydia felis (strain Fe/C-56) (Chlamydophila felis).